A 414-amino-acid polypeptide reads, in one-letter code: CinA-like protein (414 aa).

This sequence belongs to the CinA family.

The protein is CinA-like protein of Geobacter sp. (strain M21).